The chain runs to 86 residues: Translation initiation factor IF-1 (86 aa).

Residues 1-72 (MPKDDVIKME…TKGRIVYRKK (72 aa)) enclose the S1-like domain.

This sequence belongs to the IF-1 family. In terms of assembly, component of the 30S ribosomal translation pre-initiation complex which assembles on the 30S ribosome in the order IF-2 and IF-3, IF-1 and N-formylmethionyl-tRNA(fMet); mRNA recruitment can occur at any time during PIC assembly.

It is found in the cytoplasm. Functionally, one of the essential components for the initiation of protein synthesis. Stabilizes the binding of IF-2 and IF-3 on the 30S subunit to which N-formylmethionyl-tRNA(fMet) subsequently binds. Helps modulate mRNA selection, yielding the 30S pre-initiation complex (PIC). Upon addition of the 50S ribosomal subunit IF-1, IF-2 and IF-3 are released leaving the mature 70S translation initiation complex. The chain is Translation initiation factor IF-1 from Pseudothermotoga lettingae (strain ATCC BAA-301 / DSM 14385 / NBRC 107922 / TMO) (Thermotoga lettingae).